The primary structure comprises 990 residues: MRIWCFSCFTDEDEDEEDDNGGRVKKQSLATAMDNSNGDGDFVNFGENERAPRVPRWRLRLCAEESEAAWAELDRFWTSEIPLNQLVQGESSSNVVAEAEDCTMEEADHDSYHKRAKVYSGLAECRSVSGVSSDAGNSVSSVERTVSFGIASSSRTDTDMFCQNFILNYNRKDGKKDDGDDNGSSDTEDFEVHIDLTDDLLHMVFSFLNHVDLCRSAMVCRQWRVASAHEDFWRVLNFENIRISMEQFENMCSRYPNATEVNVYGAPAVNALAMKAATTLRNLEVLTIGKGHISESFFQALGECNMLRSVTVSDAILGNGAQEIHLSHDRLRELKITKCRVMRLSIRCPQLRSLSLKRSNMSQAMLNCPLLQLLDIASCHKLLDAAIRSAAISCPQLESLDVSNCSCVSDETLREIAQACANLHILNASYCPNISLESVHLPMLTVLKLHSCEGITSASMTWIANSPALEVLELDNCNLLTTVSLHLSRLQSISLVHCRKFTDLNLQSIMLSSITVSNCPALRRITITSNALRRLALQKQENLTTLVLQCHSLQEVDLSDCESLSNSVCKIFSDDGGCPMLKSLILDNCESLTAVRFCNSSLASLSLVGCRAVTSLELKCPRIEQICLDGCDHLETAFFQPVALRSLNLGICPKLSVLNIEAPYMVSLELKGCGVLSEASIMCPLLTSLDASFCSQLRDDCLSATTASCPLIESLVLMSCPSIGSDGLSSLNGLPNLTVLDLSYTFLMNLEPVFKSCIQLKVLKLQACKYLTDSSLEPLYKEGALPALEELDLSYGTLCQTAIDDLLACCTHLTHLSLNGCVNMHDLDWGSTSVHLFDYFGVYSSSDNTQEPAETANRLLQNLNCVGCPNIRKVLIPPAARFYHLSTLNLSLSVNLKEVDLTCSNLVLLNLSNCCSLEVLKLGCPRLASLFLQSCNMDEAGVEAAISGCSSLETLDLRFCPKISSVSMSKFRTVCPSLKRVFSSPNLLQD.

Positions 190–236 (FEVHIDLTDDLLHMVFSFLNHVDLCRSAMVCRQWRVASAHEDFWRVL) constitute an F-box domain. LRR repeat units lie at residues 237–258 (NFENIRISMEQFENMCSRYPNA), 280–303 (LRNLEVLTIGKGHISESFFQALGE), 317–341 (LGNGAQEIHLSHDRLRELKITKCRV), 348–373 (CPQLRSLSLKRSNMSQAMLNCPLLQL), 397–423 (LESLDVSNCSCVSDETLREIAQACANL), 441–465 (LPMLTVLKLHSCEGITSASMTWIAN), 466–477 (SPALEVLELDNC), 478–503 (NLLTTVSLHLSRLQSISLVHCRKFTD), 519–542 (CPALRRITITSNALRRLALQKQEN), 550–574 (CHSLQEVDLSDCESLSNSVCKIFSD), 589–612 (CESLTAVRFCNSSLASLSLVGCRA), 614–633 (TSLELKCPRIEQICLDGCDH), 640–652 (QPVALRSLNLGIC), 653–678 (PKLSVLNIEAPYMVSLELKGCGVLSE), 734–756 (LPNLTVLDLSYTFLMNLEPVFKS), 758–782 (IQLKVLKLQACKYLTDSSLEPLYKE), 785–809 (LPALEELDLSYGTLCQTAIDDLLAC), 813–839 (LTHLSLNGCVNMHDLDWGSTSVHLFDY), 882–893 (FYHLSTLNLSLS), 894–914 (VNLKEVDLTCSNLVLLNLSNC), 915–937 (CSLEVLKLGCPRLASLFLQSCNM), and 949–973 (CSSLETLDLRFCPKISSVSMSKFRT).

The sequence is that of F-box/LRR-repeat protein 15 (FBL15) from Arabidopsis thaliana (Mouse-ear cress).